The following is a 312-amino-acid chain: Glycerol-3-phosphate phosphatase (312 aa).

The active-site Nucleophile is the Asp-30. Positions 30, 32, and 251 each coordinate Mg(2+). Residue Asp-32 is the Proton donor of the active site.

Belongs to the HAD-like hydrolase superfamily. CbbY/CbbZ/Gph/YieH family. In terms of assembly, homodimer. The cofactor is Mg(2+).

The enzyme catalyses O-phospho-L-tyrosyl-[protein] + H2O = L-tyrosyl-[protein] + phosphate. It carries out the reaction sn-glycerol 1-phosphate + H2O = glycerol + phosphate. The catalysed reaction is sn-glycerol 3-phosphate + H2O = glycerol + phosphate. Glycerol-3-phosphate phosphatase hydrolyzing glycerol-3-phosphate into glycerol. Thereby, regulates the cellular levels of glycerol-3-phosphate a metabolic intermediate of glucose, lipid and energy metabolism. Was also shown to have a 2-phosphoglycolate phosphatase activity and a tyrosine-protein phosphatase activity. However, their physiological relevance is unclear. In vitro, also has a phosphatase activity toward ADP, ATP, GDP and GTP. The protein is Glycerol-3-phosphate phosphatase of Gallus gallus (Chicken).